Reading from the N-terminus, the 413-residue chain is Gamma-glutamyl phosphate reductase (413 aa).

The protein belongs to the gamma-glutamyl phosphate reductase family.

The protein resides in the cytoplasm. It carries out the reaction L-glutamate 5-semialdehyde + phosphate + NADP(+) = L-glutamyl 5-phosphate + NADPH + H(+). Its pathway is amino-acid biosynthesis; L-proline biosynthesis; L-glutamate 5-semialdehyde from L-glutamate: step 2/2. In terms of biological role, catalyzes the NADPH-dependent reduction of L-glutamate 5-phosphate into L-glutamate 5-semialdehyde and phosphate. The product spontaneously undergoes cyclization to form 1-pyrroline-5-carboxylate. This is Gamma-glutamyl phosphate reductase from Thermus thermophilus (strain ATCC BAA-163 / DSM 7039 / HB27).